A 277-amino-acid polypeptide reads, in one-letter code: MSRVRISLIYLCTFMIITSTKTIEYTACNNTIIIPCTIDNPTKYIRWKLDNHDILTYNKTSKTTILSKWHTSARLHSLSDSDVSLIIEYKDILPGTYTCEDNTGIKSTVKLVQRHTNWFNDYQTMLMFIFTGITLFLLFLEITYTSISVVFSTNLGILQVFGCVIAMIELCGAFLFYPSMFTLRHIIGLLMMTLPSIFLIITKVFSFWLLCKLSCAVHLIIYYQLAGYILTVLGLGLSLKECVDGTLLLSGLGTIMVSEHFSLLFLVCFPSTQRDYY.

2 N-linked (GlcNAc...) asparagine; by host glycosylation sites follow: Asn-29 and Asn-58. Helical transmembrane passes span 124–144 (TMLMFIFTGITLFLLFLEITY), 156–176 (GILQVFGCVIAMIELCGAFLF), 186–206 (IIGLLMMTLPSIFLIITKVFS), 219–239 (LIIYYQLAGYILTVLGLGLSL), and 247–267 (LLLSGLGTIMVSEHFSLLFLV).

The protein belongs to the orthopoxvirus OPG166 protein family.

The protein localises to the host membrane. Its function is as follows. Promotes, when overexpressed, the influx of extracellular Ca(2+), leading to membrane permeability and host cell necrosis. The protein is Protein OPG166 (OPG166) of Bos taurus (Bovine).